We begin with the raw amino-acid sequence, 280 residues long: UDP-3-O-acyl-N-acetylglucosamine deacetylase (280 aa).

Residues His-79, His-237, and Asp-241 each contribute to the Zn(2+) site. His-264 acts as the Proton donor in catalysis.

It belongs to the LpxC family. The cofactor is Zn(2+).

It carries out the reaction a UDP-3-O-[(3R)-3-hydroxyacyl]-N-acetyl-alpha-D-glucosamine + H2O = a UDP-3-O-[(3R)-3-hydroxyacyl]-alpha-D-glucosamine + acetate. The protein operates within glycolipid biosynthesis; lipid IV(A) biosynthesis; lipid IV(A) from (3R)-3-hydroxytetradecanoyl-[acyl-carrier-protein] and UDP-N-acetyl-alpha-D-glucosamine: step 2/6. Catalyzes the hydrolysis of UDP-3-O-myristoyl-N-acetylglucosamine to form UDP-3-O-myristoylglucosamine and acetate, the committed step in lipid A biosynthesis. In Chlamydia felis (strain Fe/C-56) (Chlamydophila felis), this protein is UDP-3-O-acyl-N-acetylglucosamine deacetylase.